A 420-amino-acid polypeptide reads, in one-letter code: Protein phosphatase methylesterase 1 (420 aa).

Low complexity-rich tracts occupy residues 18–28 (PEAPLLSESSS) and 42–51 (SSVSSTGTVI). Positions 18–51 (PEAPLLSESSSMNHPAESSHDEDSSSVSSTGTVI) are disordered. Residues Ser-197, Asp-223, and His-354 contribute to the active site.

The protein belongs to the AB hydrolase superfamily.

It carries out the reaction [phosphatase 2A protein]-C-terminal L-leucine methyl ester + H2O = [phosphatase 2A protein]-C-terminal L-leucine + methanol + H(+). Functionally, demethylates proteins that have been reversibly carboxymethylated. Demethylates the phosphatase PP2A catalytic subunit. This Aspergillus fumigatus (strain ATCC MYA-4609 / CBS 101355 / FGSC A1100 / Af293) (Neosartorya fumigata) protein is Protein phosphatase methylesterase 1 (ppe1).